Consider the following 804-residue polypeptide: Leucine--tRNA ligase (804 aa).

The short motif at Pro-40–His-51 is the 'HIGH' region element. The 'KMSKS' region motif lies at Lys-576 to Ser-580. Lys-579 provides a ligand contact to ATP.

The protein belongs to the class-I aminoacyl-tRNA synthetase family.

It is found in the cytoplasm. The catalysed reaction is tRNA(Leu) + L-leucine + ATP = L-leucyl-tRNA(Leu) + AMP + diphosphate. This Enterococcus faecalis (strain ATCC 700802 / V583) protein is Leucine--tRNA ligase.